Consider the following 195-residue polypeptide: Kiwa protein KwaA (195 aa).

The next 3 membrane-spanning stretches (helical) occupy residues 10-30 (GLYILSLAMLFVFIIILTAKI), 46-66 (LVLTNIVPIVCFVFFLFSIYF), and 117-137 (IAYLLLVVVIGIIFIKTDKYY).

Its subcellular location is the cell inner membrane. In terms of biological role, component of antiviral defense system Kiwa, composed of KwaA and KwaB. Expression of Kiwa in E.coli (strain MG1655) confers resistance to phages lambda and SECphi18. This chain is Kiwa protein KwaA, found in Escherichia coli O55:H7 (strain RM12579 / EPEC).